The sequence spans 234 residues: MIELFQLDKSLHFPPPAHALTDPPGLLAFGGDLSVNRLLHAYQQGIFPWFSANEPILWWSPDPRGILPLDNFSVSKSLRKFIRKTPLRVTVNRRFDEVIYACAKVKRQSSGTWITDDMINAYIELHRCGGAHSIEVWDDEELVGGLYGVTPGNVFCGESMFHYATNASKLAMFYLVELLRLNGCEFIDCQLQNDHLASLGCIEMPRAEFLNRLKEAVKHPMDQSLWLPRELTQP.

It belongs to the L/F-transferase family.

It is found in the cytoplasm. The catalysed reaction is N-terminal L-lysyl-[protein] + L-leucyl-tRNA(Leu) = N-terminal L-leucyl-L-lysyl-[protein] + tRNA(Leu) + H(+). It carries out the reaction N-terminal L-arginyl-[protein] + L-leucyl-tRNA(Leu) = N-terminal L-leucyl-L-arginyl-[protein] + tRNA(Leu) + H(+). The enzyme catalyses L-phenylalanyl-tRNA(Phe) + an N-terminal L-alpha-aminoacyl-[protein] = an N-terminal L-phenylalanyl-L-alpha-aminoacyl-[protein] + tRNA(Phe). Functions in the N-end rule pathway of protein degradation where it conjugates Leu, Phe and, less efficiently, Met from aminoacyl-tRNAs to the N-termini of proteins containing an N-terminal arginine or lysine. This Pseudoalteromonas atlantica (strain T6c / ATCC BAA-1087) protein is Leucyl/phenylalanyl-tRNA--protein transferase.